The chain runs to 528 residues: T-complex protein 1 subunit gamma (528 aa).

Ser-250 bears the Phosphoserine mark. Cys-364 and Cys-370 are oxidised to a cystine.

Belongs to the TCP-1 chaperonin family. As to quaternary structure, heterooligomeric complex of about 850 to 900 kDa that forms two stacked rings, 12 to 16 nm in diameter.

It is found in the cytoplasm. Its function is as follows. Molecular chaperone; assists the folding of proteins upon ATP hydrolysis. Known to play a role, in vitro, in the folding of actin and tubulin. The chain is T-complex protein 1 subunit gamma (cct3) from Schizosaccharomyces pombe (strain 972 / ATCC 24843) (Fission yeast).